Here is a 417-residue protein sequence, read N- to C-terminus: Cotranscriptional regulator ARB2A (417 aa).

Positions 1–18 (MSISLSSLIFLPIWINMA) are cleaved as a signal peptide. N26 carries N-linked (GlcNAc...) asparagine glycosylation. The segment at 208 to 248 (KQKMHKQSSSSDGTDEPAGKRERRDKVSKETKKRRDFYEKY) is disordered. The segment covering 224 to 237 (PAGKRERRDKVSKE) has biased composition (basic and acidic residues). Catalysis depends on S294, which acts as the Nucleophile. The segment at 398 to 417 (SSSQKPALTRRSHRIKHEEL) is disordered. Positions 405-417 (LTRRSHRIKHEEL) are enriched in basic residues. Positions 414-417 (HEEL) match the Prevents secretion from ER motif.

Belongs to the ARB2A family. In terms of assembly, interacts with AGO2. Found in a complex, composed of AGO2, CHD7 and ARB2A.

It localises to the nucleus. It is found in the cytoplasm. The protein resides in the endoplasmic reticulum. Functionally, plays a role in the regulation of alternative splicing, by interacting with AGO2 and CHD7. Seems to be required for stabilizing protein-protein interactions at the chromatin-spliceosome interface. May have hydrolase activity. This Mus musculus (Mouse) protein is Cotranscriptional regulator ARB2A (Arb2a).